A 1215-amino-acid chain; its full sequence is MSRRLSLPAGAPVTVAVSPVRSPGGDAVVRRGSGLTSPVPRHSLGSSTATLQVSPVRRSGGSRYLGASRDGGADESAEFVHYTVHIPPTPDRATASVASEAEAAAEAEEVHRPQRSYISGTIFTGGLNCATRGHVLNFSGEGGATAASRAAASGNMSCKMRGCDMPAFLNGGRPPCDCGFMICKECYAECAAGNCPGCKEAFSAGSDTDESDSVTDDDDDEAVSSSEERDQLPLTSMARKFSVVHSMKVPGAAANGNGKPAEFDHARWLFETKGTYGYGNALWPKDGHAHSGAGFVAADEPPNFGARCRRPLTRKTSVSQAILSPYRLLIAIRLVALGFFLAWRIRHPNPEAVWLWAMSVACEVWFAFSWLLDSLPKLCPVHRAADLAVLAERFESPTARNPKGRSDLPGIDVFVTSADPEKEPPLVTANTILSILAADYPVEKLACYLSDDGGALLSFEALAETASFARTWVPFCRKHGVEPRCPEAYFGQKRDFLKNKVRVDFVRERRKVKREYDEFKVRVNSLPEAIRRRSDAYNAGEELRARRRQQEEAAAAAAAGNGELGAAAVETAAVKATWMSDGSHWPGTWTCPAADHARGDHAGIIQAMLAPPTSEPVMGGEAAECGGLIDTTGVDVRLPMLVYVSREKRPGYDHNKKAGAMNALVRTSAIMSNGPFILNLDCDHYVHNSSALREGMCFMLDRGGDRVCFVQFPQRFEGVDPSDRYANHNLVFFDVSMRAMDGLQGPMYVGTGCVFRRTALYGFSPPRATEHHGWLGRRKIKLFLTKKKSMGKKTDRAEDDTEMMLPPIEDDDGGADIEASAMLPKRFGGSATFVASIPVAEYQGRLLQDTPGCHHGRPAGALAVPREPLDAATVAEAIGVISCFYEEKTEWGRRIGWIYGSVTEDVVTGYRMHNRGWRSVYCVTPRRDAFRGTAPINLTDRLHQVLRWATGSVEIFFSRNNALFASPRMKLLQRVAYFNAGMYPFTSVFLLAYCLLPAVSLFSGKFIVQRLSATFLAFLLVITLTLCLLALLEIKWSGITLHEWWRNEQFWVIGGTSAHPAAVLQGLLKVIAGVDISFTLTSKPGNGGGDGGVGGEGNDDEAFAELYEVRWSYLMVPPVTIMMVNAVAIAVAAARTLYSEFPQWSKLLGGAFFSFWVLCHLYPFAKGLLGRRGRVPTIVFVWSGLISMIISLLWVYINPPAGARERIGGGGFSFP.

2 disordered regions span residues 24–46 and 206–231; these read GGDAVVRRGSGLTSPVPRHSLGS and SDTDESDSVTDDDDDEAVSSSEERDQ. A compositionally biased stretch (acidic residues) spans 207–222; the sequence is DTDESDSVTDDDDDEA. 2 helical membrane-spanning segments follow: residues 321–341 and 352–372; these read AILSPYRLLIAIRLVALGFFL and AVWLWAMSVACEVWFAFSWLL. Catalysis depends on residues Asp-452 and Asp-905. 6 helical membrane passes run 988 to 1008, 1014 to 1034, 1060 to 1080, 1114 to 1134, 1147 to 1167, and 1177 to 1197; these read VFLLAYCLLPAVSLFSGKFIV, TFLAFLLVITLTLCLLALLEI, PAAVLQGLLKVIAGVDISFTL, LMVPPVTIMMVNAVAIAVAAA, LLGGAFFSFWVLCHLYPFAKG, and TIVFVWSGLISMIISLLWVYI.

It belongs to the glycosyltransferase 2 family. Plant cellulose synthase-like D subfamily.

The protein resides in the golgi apparatus membrane. Its function is as follows. Thought to be a Golgi-localized beta-glycan synthase that polymerize the backbones of noncellulosic polysaccharides (hemicelluloses) of plant cell wall. This chain is Cellulose synthase-like protein D4 (CSLD4), found in Oryza sativa subsp. japonica (Rice).